The following is a 212-amino-acid chain: Pyridoxine/pyridoxamine 5'-phosphate oxidase (212 aa).

Substrate-binding positions include 8–11 (RKNY) and Lys66. FMN contacts are provided by residues 61 to 66 (RIVLIK), 76 to 77 (FT), Arg82, Lys83, and Gln105. Substrate is bound by residues Tyr123, Arg127, and Ser131. FMN contacts are provided by residues 140 to 141 (QS) and Trp184. 190 to 192 (RLH) contacts substrate. FMN is bound at residue Arg194.

Belongs to the pyridoxamine 5'-phosphate oxidase family. Homodimer. It depends on FMN as a cofactor.

The catalysed reaction is pyridoxamine 5'-phosphate + O2 + H2O = pyridoxal 5'-phosphate + H2O2 + NH4(+). The enzyme catalyses pyridoxine 5'-phosphate + O2 = pyridoxal 5'-phosphate + H2O2. It participates in cofactor metabolism; pyridoxal 5'-phosphate salvage; pyridoxal 5'-phosphate from pyridoxamine 5'-phosphate: step 1/1. It functions in the pathway cofactor metabolism; pyridoxal 5'-phosphate salvage; pyridoxal 5'-phosphate from pyridoxine 5'-phosphate: step 1/1. In terms of biological role, catalyzes the oxidation of either pyridoxine 5'-phosphate (PNP) or pyridoxamine 5'-phosphate (PMP) into pyridoxal 5'-phosphate (PLP). In Paraburkholderia phymatum (strain DSM 17167 / CIP 108236 / LMG 21445 / STM815) (Burkholderia phymatum), this protein is Pyridoxine/pyridoxamine 5'-phosphate oxidase.